A 239-amino-acid chain; its full sequence is Type III effector protein HopBA1 (239 aa).

Low complexity predominate over residues 1-20; the sequence is MLNRISSSSPTSYVSSGSSS. Residues 1–31 form a disordered region; it reads MLNRISSSSPTSYVSSGSSSAGINPSINVRP.

The protein localises to the secreted. It localises to the host cell. Functionally, virulence factor recognized by the A.thaliana disease resistance protein RBA1, which triggers plant cell death. HopBA1 enhances RBA1 self-association, which is necessary for ectopic autoactivation of host cell death. The sequence is that of Type III effector protein HopBA1 from Pseudomonas syringae pv. aptata.